A 264-amino-acid polypeptide reads, in one-letter code: Thymidylate synthase (264 aa).

A dUMP-binding site is contributed by R21. H51 contacts (6R)-5,10-methylene-5,6,7,8-tetrahydrofolate. DUMP is bound at residue 126–127; that stretch reads RR. C146 (nucleophile) is an active-site residue. Residues 166–169, N177, and 207–209 each bind dUMP; these read RSAD and HLY. Position 169 (D169) interacts with (6R)-5,10-methylene-5,6,7,8-tetrahydrofolate. Residue A263 coordinates (6R)-5,10-methylene-5,6,7,8-tetrahydrofolate.

Belongs to the thymidylate synthase family. Bacterial-type ThyA subfamily. Homodimer.

It localises to the cytoplasm. The catalysed reaction is dUMP + (6R)-5,10-methylene-5,6,7,8-tetrahydrofolate = 7,8-dihydrofolate + dTMP. The protein operates within pyrimidine metabolism; dTTP biosynthesis. Its function is as follows. Catalyzes the reductive methylation of 2'-deoxyuridine-5'-monophosphate (dUMP) to 2'-deoxythymidine-5'-monophosphate (dTMP) while utilizing 5,10-methylenetetrahydrofolate (mTHF) as the methyl donor and reductant in the reaction, yielding dihydrofolate (DHF) as a by-product. This enzymatic reaction provides an intracellular de novo source of dTMP, an essential precursor for DNA biosynthesis. This chain is Thymidylate synthase, found in Azotobacter vinelandii (strain DJ / ATCC BAA-1303).